A 366-amino-acid chain; its full sequence is Chorismate synthase (366 aa).

NADP(+) is bound at residue Arg-48. FMN is bound by residues 125 to 127, 238 to 239, Gly-278, 293 to 297, and Arg-319; these read RSS, NA, and KPTSS.

Belongs to the chorismate synthase family. In terms of assembly, homotetramer. The cofactor is FMNH2.

The catalysed reaction is 5-O-(1-carboxyvinyl)-3-phosphoshikimate = chorismate + phosphate. It participates in metabolic intermediate biosynthesis; chorismate biosynthesis; chorismate from D-erythrose 4-phosphate and phosphoenolpyruvate: step 7/7. Functionally, catalyzes the anti-1,4-elimination of the C-3 phosphate and the C-6 proR hydrogen from 5-enolpyruvylshikimate-3-phosphate (EPSP) to yield chorismate, which is the branch point compound that serves as the starting substrate for the three terminal pathways of aromatic amino acid biosynthesis. This reaction introduces a second double bond into the aromatic ring system. This is Chorismate synthase from Alkalilimnicola ehrlichii (strain ATCC BAA-1101 / DSM 17681 / MLHE-1).